A 2278-amino-acid polypeptide reads, in one-letter code: MASKPFYPIEFNPSVELQVLRSAHLRVGGREQMFETINDLNDHVRGVVAKLWCKHLHRSLAAAPTFTEEGLLDSFLSKPPVDINPDTTFRELFGINPHEQFPLSIHDLAKLQGELVDAARNPGHVLRRHYSTDSLTALINKITKFVPVHATLQEMQARRAFERERAELFRELPHADLDVSRQQKSYFYAMWRQVVKKSKEFFIPLVKCTSWRKKFTEPAEIVRQVLVHFCEGMRSQFSTNANYINLSLIAKLRPTVLTMILQQHKNTYRGWLATVTALVEVYSNLFQDMRDTAVSAVSAITLVFETIKDFVVNVIDLVKSTFQSQGPTSCGWAAIIAGALLILMKLSGCSNTTSYWHRLLKVCGGVTTIAAAARAVVWVRDIIAEADGKARLKKYMARTAALLELAASRDVTGTDELKRLLDCFTQLIEEGTELIQEFGTSPLAGLTRSYVSELESTANSIRSTILLDTPRKTPVAIILTGPPGIGKTRLAQHLAAGFGKVSNFSVTLDHHDSYTGNEVAIWDEFDVDTQGKFVETMIGVVNTAPYPLNCDRVENKGKVFTSDYIICTSNYPTSVLPDNPRAGAFYRRVTTIDVSSPTIEDWKKKNPGKKPPPDLYKNDFTHLRLSVRPFLGYNPEGDTLDGVRVKPVLTSVDGLSRLMETKFKEQGNEHRNLWITCPRDLVAPAASGLKAYMAANRALAQVFQEPSSQDIGETCTSRVYVSCNNPPPTYSGRVVKITAINPWDASLANSMLSMFETTSHIPASIQREIMYRVWDPLVHLQTREPNTQMLPYINRVVPVSSAFDFIRGLRHHLGLCSVKGMWRAYQGWNSSSSILEFLSKHMADVAFPHNPECTVFRAPDGDVIFYTFGSYACFVSPARVPFVGEPPKNVHSNITRNMTWAETLRLLAETITESLVHFGPFLLMMHNVSYLATRSGREEEAKGKTKHGRGAKHARRGGVSLSDDEYDEWRDLVRDWRQDMTVGEFVELRERYALGMDSEDVQRYRAWLELRAMRMGAGAYQHATIIGRGGVQDTIIRTQPMRAPRAPRNQGYDEEAPTPIVTFTSGGDHIGYGCHMGNGVVVTVTHVASASDQVEGQDFAIRKTEGETTWVNTNLGHLPHYQIGDGAPVYYSARLHPVTTLAEGTYETPNITVQGYHLRIINGYPTKRGDCGTPYFDSCRRLVGLHAATSTNGETKLAQRVTKTSKVENAFAWKGLPVVRGPDCGGMPTGTRYHRSPAWPNPVEGETHAPAPFGSGDERYKFSQVEMLVNGLKPYSEPTPGIPPALLQRAATHTRTYLETIIGTHRSPNLSFSEACSLLEKSTSCGPFVAGQKGDYWDEDKQCYTGVLAEHLAKAWDAANRGVAPQNAYKLALKDELRPIEKNAQGKRRLLWGCDAGATLVATAAFKGVATRLQAVAPMTPVSVGINMDSYQVEVLNESLKGGVLYCLDYSKWDSTQHPAVTAASLGILERLSEATPITTSAVELLSSPARGHLNDIVFITKSGLPSGMPFTSVINSLNHMTYFAAAVLKAYEQHGAPYTGNVFQVETVHTYGDDCLYSVCPATASIFQTVLANLTSFGLKPTAADKSETIAPTHTPVFLKRTLTCTPRGVRGLLDITSIKRQFLWIKANRTVDINSPPAYDRDARGIQLENALAYASQHGHAVFEEVAELARHTAKAEGLVLTNVNYDQALATYESWFIGGTGLVQGSPSEETTKLVFEMEGLGQPQPQGGEKTSPQPVTPQDTIGPTAALLLPTQIETPNASAQRLELAMATGAVTSNVPNCIRECFASVTTIPWTTRQAANTFLGAIHLGPRINPYTAHLSAMFAGWGGGFQVRVTISGSGLFAGRAVTAILPPGVNPASVQNPGVFPHAFIDARTTEPILINLPDIRPVDFHRVDGDDATASVGLWVAQPLINPFQTGPVSTCWLSFETRPGPDFDFCLLKAPEQQMDNGISPASLLPRRLGRSRGNRMGGRIVGLVVVAAAEQVNHHFDARSTTLGWSTLPVEPIAGDISWYGDAGNKSIRGLVSAQGKGIIFPNIVNHWTDVALSSKTSNTTTIPTDTSTLGNLPGASGPLVTFADNGDVNESSAQNAILTAANQNFTSFSPTFDAAGIWVWMPWATDRPGASDSNIYISPTWVNGNPSHPIHEKCTNMIGTNFQFGGTGTNNIMLWQEQHFTSWPGAAEVYCSQLESTAEIFQNNIVNIPMNQMAVFNVETAGNSFQIAILPNGYCVTNAPVGTHQLLDYETSFKFVGLFPQSTSLQGPHGNSGRAVRFLE.

The SF3 helicase domain maps to 454–609 (LESTANSIRS…EDWKKKNPGK (156 aa)). 481-488 (GPPGIGKT) lines the ATP pocket. The tract at residues 939 to 958 (EEAKGKTKHGRGAKHARRGG) is disordered. The segment covering 944–956 (KTKHGRGAKHARR) has biased composition (basic residues). An O-(5'-phospho-RNA)-tyrosine modification is found at Tyr-966. The Peptidase C24 domain occupies 1056 to 1204 (APTPIVTFTS…TKLAQRVTKT (149 aa)). Residues His-1086, Glu-1107, and Cys-1171 each act as for 3CLpro activity in the active site. Residues 1443-1568 (GVLYCLDYSK…SVCPATASIF (126 aa)) form the RdRp catalytic domain.

Homodimer. Homomultimer. Post-translationally, specific enzymatic cleavages in vivo yield mature proteins. Pro-Pol is first autocatalytically cleaved, then processes the whole polyprotein. In terms of processing, VPg is uridylylated by the polymerase and is covalently attached to the 5'-end of the polyadenylated genomic and subgenomic RNAs. This uridylylated form acts as a nucleotide-peptide primer for the polymerase.

It localises to the virion. The protein resides in the host cytoplasm. It carries out the reaction a ribonucleoside 5'-triphosphate + H2O = a ribonucleoside 5'-diphosphate + phosphate + H(+). The catalysed reaction is RNA(n) + a ribonucleoside 5'-triphosphate = RNA(n+1) + diphosphate. It catalyses the reaction Endopeptidase with a preference for cleavage when the P1 position is occupied by Glu-|-Xaa and the P1' position is occupied by Gly-|-Yaa.. Its function is as follows. Together with NTPase and NS4, initiates the formation of the replication complex. Induces the proliferation of the host smooth ER membranes forming long tubular structures. These remodeled membranes probably form the viral factories that contain the replication complex. Displays NTPase activity, but no helicase activity. Induces the formation of convoluted membranes derived from the host ER. These remodeled membranes probably form the viral factories that contain the replication complex. Together with NS2 and NS4, initiates the formation of the replication complex. In terms of biological role, probable key protein responsible for the formation of membrane alterations by the virus. Induces the formation of convoluted membranes derived from the host ER. These remodeled membranes probably form the viral factories that contain the replication complex. Together with NS2 and NTPase, initiates the formation of the replication complex. Functionally, viral genome-linked protein is covalently linked to the 5'-end of the positive-strand, negative-strand genomic RNAs and subgenomic RNA. Acts as a genome-linked replication primer. May recruit ribosome to viral RNA thereby promoting viral proteins translation. Interacts with host translation initiation complex to allow the translation of viral proteins. Its function is as follows. Protease-polymerase p76 processes the polyprotein: Pro-Pol is first released by autocleavage, then all other proteins are cleaved. Cleaves host translation initiation factor eIF4G1, eIF4G2 and PABP1 thereby inducing a shutdown of host protein synthesis. This shutdown may not prevent viral mRNA from being translated since viral Vpg replaces the cap. It is also an RNA-directed RNA polymerase which replicates genomic and antigenomic viral RNA by recognizing specific signals. Also transcribes a subgenomic mRNA by initiating RNA synthesis internally on antigenomic RNA. This sgRNA codes for structural proteins. Catalyzes the covalent attachment VPg with viral RNAs. Capsid protein self assembles to form an icosahedral capsid with a T=3 symmetry, about 38 nm in diameter, and consisting of 180 capsid proteins. The capsid encapsulate the genomic RNA and VP2 proteins. Attaches virion to target cells, inducing endocytosis of the viral particle. Acidification of the endosome induces conformational change of capsid protein thereby injecting virus genomic RNA into host cytoplasm. The polypeptide is Genome polyprotein (Homo sapiens (Human)).